We begin with the raw amino-acid sequence, 248 residues long: Aspartate/glutamate leucyltransferase (248 aa).

The protein belongs to the R-transferase family. Bpt subfamily.

Its subcellular location is the cytoplasm. It carries out the reaction N-terminal L-glutamyl-[protein] + L-leucyl-tRNA(Leu) = N-terminal L-leucyl-L-glutamyl-[protein] + tRNA(Leu) + H(+). The catalysed reaction is N-terminal L-aspartyl-[protein] + L-leucyl-tRNA(Leu) = N-terminal L-leucyl-L-aspartyl-[protein] + tRNA(Leu) + H(+). Functions in the N-end rule pathway of protein degradation where it conjugates Leu from its aminoacyl-tRNA to the N-termini of proteins containing an N-terminal aspartate or glutamate. This Methylorubrum populi (strain ATCC BAA-705 / NCIMB 13946 / BJ001) (Methylobacterium populi) protein is Aspartate/glutamate leucyltransferase.